A 519-amino-acid chain; its full sequence is Dihydropyrimidinase (519 aa).

The Zn(2+) site is built by H67 and H69. S79 carries the phosphoserine modification. Position 159 (K159) interacts with Zn(2+). K159 carries the N6-carboxylysine modification. A substrate-binding site is contributed by Y164. Zn(2+) is bound by residues H192 and H248. Residue K256 is modified to N6-succinyllysine. Residue D326 coordinates Zn(2+). N347 contributes to the substrate binding site. Residue T510 is modified to Phosphothreonine.

It belongs to the metallo-dependent hydrolases superfamily. Hydantoinase/dihydropyrimidinase family. As to quaternary structure, homotetramer. Requires Zn(2+) as cofactor. In terms of processing, carboxylation allows a single lysine to coordinate two zinc ions.

It carries out the reaction 5,6-dihydrouracil + H2O = 3-(carbamoylamino)propanoate + H(+). Catalyzes the second step of the reductive pyrimidine degradation, the reversible hydrolytic ring opening of dihydropyrimidines. Can catalyze the ring opening of 5,6-dihydrouracil to N-carbamyl-alanine and of 5,6-dihydrothymine to N-carbamyl-amino isobutyrate. This is Dihydropyrimidinase (Dpys) from Rattus norvegicus (Rat).